Here is a 341-residue protein sequence, read N- to C-terminus: Methionine import ATP-binding protein MetN (341 aa).

Positions 9–247 constitute an ABC transporter domain; sequence ISVQDVSKKL…SENSITNELF (239 aa). 41 to 48 provides a ligand contact to ATP; sequence GHSGSGKT.

It belongs to the ABC transporter superfamily. Methionine importer (TC 3.A.1.24) family. In terms of assembly, the complex is composed of two ATP-binding proteins (MetN), two transmembrane proteins (MetI) and a solute-binding protein (MetQ).

The protein resides in the cell inner membrane. The enzyme catalyses L-methionine(out) + ATP + H2O = L-methionine(in) + ADP + phosphate + H(+). It carries out the reaction D-methionine(out) + ATP + H2O = D-methionine(in) + ADP + phosphate + H(+). Its function is as follows. Part of the ABC transporter complex MetNIQ involved in methionine import. Responsible for energy coupling to the transport system. This chain is Methionine import ATP-binding protein MetN, found in Chlamydia pneumoniae (Chlamydophila pneumoniae).